A 354-amino-acid chain; its full sequence is Probable L-ascorbate-6-phosphate lactonase UlaG (354 aa).

Belongs to the UlaG family. A divalent metal cation is required as a cofactor.

It is found in the cytoplasm. The catalysed reaction is L-ascorbate 6-phosphate + H2O = 3-dehydro-L-gulonate 6-phosphate. The protein operates within cofactor degradation; L-ascorbate degradation; D-xylulose 5-phosphate from L-ascorbate: step 1/4. In terms of biological role, probably catalyzes the hydrolysis of L-ascorbate-6-P into 3-keto-L-gulonate-6-P. Is essential for L-ascorbate utilization under anaerobic conditions. The chain is Probable L-ascorbate-6-phosphate lactonase UlaG from Salmonella agona (strain SL483).